Consider the following 335-residue polypeptide: Hsp90 co-chaperone Cdc37-like 1 (335 aa).

The segment covering 1-11 has biased composition (pro residues); it reads MEQPWPPPGPW. Residues 1–42 form a disordered region; sequence MEQPWPPPGPWSFPRTGGETEEESDLDVSPSSSHYSPVPDGG. A self-association region spans residues 2 to 170; sequence EQPWPPPGPW…YEQKIRHFGM (169 aa). The segment covering 27–40 has biased composition (low complexity); sequence DVSPSSSHYSPVPD. S32 and S88 each carry phosphoserine. A coiled-coil region spans residues 84 to 120; sequence HNSESLDQEHAKAQTAVSELRQREEEWRQKEEALVQR. Residues 147–276 are self-association and interaction with Hsp90; that stretch reads KTEEEDKSQS…SRVRLYAQSQ (130 aa). The segment at 266–335 is interaction with Hsp70; it reads KSRVRLYAQS…EDDDRMMDTV (70 aa). The interval 277-335 is required for interaction with STIP1; that stretch reads SLQPVTVQNHVPHSGVGCIGSLESLPQNPDSLQCCTPAPLCSVDSVVHKEDDDRMMDTV.

Belongs to the CDC37 family. Self-associates. Forms complexes with Hsp70 and Hsp90. Interacts with CDC37, FKBP4, PPID and STIP1.

The protein localises to the cytoplasm. Functionally, co-chaperone that binds to numerous proteins and promotes their interaction with Hsp70 and Hsp90. This is Hsp90 co-chaperone Cdc37-like 1 (Cdc37l1) from Mus musculus (Mouse).